The following is a 294-amino-acid chain: Glycine--tRNA ligase alpha subunit (294 aa).

This sequence belongs to the class-II aminoacyl-tRNA synthetase family. In terms of assembly, tetramer of two alpha and two beta subunits.

It is found in the cytoplasm. It carries out the reaction tRNA(Gly) + glycine + ATP = glycyl-tRNA(Gly) + AMP + diphosphate. The protein is Glycine--tRNA ligase alpha subunit of Lawsonia intracellularis (strain PHE/MN1-00).